Reading from the N-terminus, the 237-residue chain is tRNA (guanine-N(7)-)-methyltransferase (237 aa).

Residues glutamate 68, glutamate 93, aspartate 120, and aspartate 143 each contribute to the S-adenosyl-L-methionine site. Aspartate 143 is a catalytic residue. Residues lysine 147, aspartate 179, and 216–219 (TKFE) contribute to the substrate site.

This sequence belongs to the class I-like SAM-binding methyltransferase superfamily. TrmB family.

It catalyses the reaction guanosine(46) in tRNA + S-adenosyl-L-methionine = N(7)-methylguanosine(46) in tRNA + S-adenosyl-L-homocysteine. Its pathway is tRNA modification; N(7)-methylguanine-tRNA biosynthesis. Functionally, catalyzes the formation of N(7)-methylguanine at position 46 (m7G46) in tRNA. This is tRNA (guanine-N(7)-)-methyltransferase from Shewanella pealeana (strain ATCC 700345 / ANG-SQ1).